Reading from the N-terminus, the 110-residue chain is UPF0060 membrane protein Francci3_2786 (110 aa).

4 helical membrane passes run 8–28 (LLFV…WQGV), 33–53 (GPVW…VATL), 62–82 (ILAA…VAVD), and 87–107 (DRYD…IMYA).

This sequence belongs to the UPF0060 family.

The protein localises to the cell membrane. This chain is UPF0060 membrane protein Francci3_2786, found in Frankia casuarinae (strain DSM 45818 / CECT 9043 / HFP020203 / CcI3).